We begin with the raw amino-acid sequence, 334 residues long: TPR repeat-containing protein MJ0798 (334 aa).

TPR repeat units lie at residues 102–135 (WKLW…NQNT), 137–168 (LLCK…DRNN), 169–202 (YKAL…NPND), 204–235 (EALE…KPDD), 236–269 (IDLI…NPNV), 273–306 (EQIY…NLYH), and 308–333 (EIYE…YKKL).

In Methanocaldococcus jannaschii (strain ATCC 43067 / DSM 2661 / JAL-1 / JCM 10045 / NBRC 100440) (Methanococcus jannaschii), this protein is TPR repeat-containing protein MJ0798.